The following is a 184-amino-acid chain: Guanylate kinase (184 aa).

The region spanning 5–183 is the Guanylate kinase-like domain; it reads KKLIILTGPS…TAKRIIKLIQ (179 aa). Residue 12-19 participates in ATP binding; the sequence is GPSGVGKG.

Belongs to the guanylate kinase family.

Its subcellular location is the cytoplasm. The enzyme catalyses GMP + ATP = GDP + ADP. Essential for recycling GMP and indirectly, cGMP. This is Guanylate kinase from Prochlorococcus marinus (strain MIT 9312).